The primary structure comprises 353 residues: Diacetylchitobiose uptake system permease protein NgcF (353 aa).

Residues 1-24 (MKDTIPTAETASRRPEPAARGGRP) are disordered. Helical transmembrane passes span 36-56 (FFLA…LIPF), 100-120 (LLAA…AVAI), 141-161 (IISF…WAQM), 197-217 (VMFV…IAAI), 254-274 (AYIY…AMVP), and 303-323 (TAMG…VFLV). The ABC transmembrane type-1 domain maps to 95–320 (LRNVALLAAF…AVTLVFAALV (226 aa)). The segment at 329–353 (GGEGESKRKAPGSRARRAAAKGGAR) is disordered. A compositionally biased stretch (basic residues) spans 337 to 353 (KAPGSRARRAAAKGGAR).

The protein belongs to the binding-protein-dependent transport system permease family. As to quaternary structure, the complex is composed of two ATP-binding proteins (MsiK), two transmembrane proteins (NgcF and NgcG) and a solute-binding protein (NgcE).

Its subcellular location is the cell membrane. Functionally, part of the ABC transporter complex NgcEFG-MsiK involved in N,N'-diacetylchitobiose ((GlcNAc)2) uptake. Responsible for the translocation of the substrate across the membrane. This chain is Diacetylchitobiose uptake system permease protein NgcF, found in Streptomyces coelicolor (strain ATCC BAA-471 / A3(2) / M145).